The sequence spans 88 residues: DNA-directed RNA polymerase subunit omega (88 aa).

It belongs to the RNA polymerase subunit omega family. The RNAP catalytic core consists of 2 alpha, 1 beta, 1 beta' and 1 omega subunit. When a sigma factor is associated with the core the holoenzyme is formed, which can initiate transcription.

It carries out the reaction RNA(n) + a ribonucleoside 5'-triphosphate = RNA(n+1) + diphosphate. Promotes RNA polymerase assembly. Latches the N- and C-terminal regions of the beta' subunit thereby facilitating its interaction with the beta and alpha subunits. The polypeptide is DNA-directed RNA polymerase subunit omega (Actinobacillus succinogenes (strain ATCC 55618 / DSM 22257 / CCUG 43843 / 130Z)).